The primary structure comprises 484 residues: Cobyric acid synthase (484 aa).

Residues 246-437 form the GATase cobBQ-type domain; the sequence is ALRVVVPALP…VHGLFDTPAA (192 aa). Cys327 functions as the Nucleophile in the catalytic mechanism. Residue His429 is part of the active site.

The protein belongs to the CobB/CobQ family. CobQ subfamily.

It functions in the pathway cofactor biosynthesis; adenosylcobalamin biosynthesis. Its function is as follows. Catalyzes amidations at positions B, D, E, and G on adenosylcobyrinic A,C-diamide. NH(2) groups are provided by glutamine, and one molecule of ATP is hydrogenolyzed for each amidation. This chain is Cobyric acid synthase, found in Paraburkholderia phymatum (strain DSM 17167 / CIP 108236 / LMG 21445 / STM815) (Burkholderia phymatum).